The chain runs to 4265 residues: Dynein axonemal heavy chain 1 (4265 aa).

The segment at 1-88 (MEQPNSKGYS…KSPLTGTDKK (88 aa)) is disordered. Residues 1-1542 (MEQPNSKGYS…YIRAVNAEFI (1542 aa)) form a stem region. Positions 60–69 (PHLPLPPAPP) are enriched in pro residues. AAA regions lie at residues 1543–1764 (YGYE…VISA), 1824–2057 (EAIR…SSVK), 2189–2449 (TMVP…VFQG), and 2547–2799 (DYNQ…LTRH). The short motif at 1581 to 1588 (GPAGTGKT) is the GPAGTGKT motif element. Residue 1581–1588 (GPAGTGKT) participates in ATP binding. The CFDEFNR motif signature appears at 1631-1637 (CFDEFNR). Residues 1862 to 1869 (GPTGSGKS), 2227 to 2234 (GPTGTGKT), and 2586 to 2593 (GVGGSGRS) contribute to the ATP site. The stalk stretch occupies residues 2814–3112 (FSILIGQKKL…EELELKCEQC (299 aa)). Residues 3074–3122 (LDEAKQRLREVEDGIATMQAKYRECITKKEELELKCEQCEQRLGRAGKL) are a coiled coil. 2 AAA regions span residues 3197–3427 (LGNP…EIQA) and 3640–3859 (MQDF…QLKM).

Belongs to the dynein heavy chain family. As to quaternary structure, consists of at least two heavy chains and a number of intermediate and light chains. As to expression, expressed primarily in trachea and testis, 2 tissues containing axonemal structures. Also expressed in brain.

It localises to the cytoplasm. The protein localises to the cytoskeleton. The protein resides in the cilium axoneme. It is found in the cell projection. Its subcellular location is the cilium. It localises to the flagellum. Functionally, force generating protein of cilia required for sperm flagellum motility. Produces force towards the minus ends of microtubules. Dynein has ATPase activity; the force-producing power stroke is thought to occur on release of ADP. Required in spermatozoa for the formation of the inner dynein arms and biogenesis of the axoneme. The sequence is that of Dynein axonemal heavy chain 1 from Homo sapiens (Human).